A 426-amino-acid polypeptide reads, in one-letter code: 3-phosphoshikimate 1-carboxyvinyltransferase (426 aa).

3 residues coordinate 3-phosphoshikimate: Lys-22, Ser-23, and Arg-27. Lys-22 contacts phosphoenolpyruvate. Gly-96 and Arg-124 together coordinate phosphoenolpyruvate. 7 residues coordinate 3-phosphoshikimate: Ser-170, Ser-171, Gln-172, Ser-198, Asp-314, Asn-337, and Lys-341. Gln-172 contacts phosphoenolpyruvate. Asp-314 functions as the Proton acceptor in the catalytic mechanism. Phosphoenolpyruvate contacts are provided by Arg-345, Arg-387, and Lys-412.

Belongs to the EPSP synthase family. As to quaternary structure, monomer.

It localises to the cytoplasm. It carries out the reaction 3-phosphoshikimate + phosphoenolpyruvate = 5-O-(1-carboxyvinyl)-3-phosphoshikimate + phosphate. Its pathway is metabolic intermediate biosynthesis; chorismate biosynthesis; chorismate from D-erythrose 4-phosphate and phosphoenolpyruvate: step 6/7. Its function is as follows. Catalyzes the transfer of the enolpyruvyl moiety of phosphoenolpyruvate (PEP) to the 5-hydroxyl of shikimate-3-phosphate (S3P) to produce enolpyruvyl shikimate-3-phosphate and inorganic phosphate. The sequence is that of 3-phosphoshikimate 1-carboxyvinyltransferase from Shewanella sp. (strain MR-7).